Here is a 444-residue protein sequence, read N- to C-terminus: Maturase K (444 aa).

This sequence belongs to the intron maturase 2 family. MatK subfamily.

Its subcellular location is the plastid. The protein resides in the chloroplast. Functionally, usually encoded in the trnK tRNA gene intron. Probably assists in splicing its own and other chloroplast group II introns. The sequence is that of Maturase K from Chamaecyparis lawsoniana (Lawson false cypress).